The chain runs to 73 residues: EAGKDCDCGSPANPCCDAATCKLLPGAQCGEGPCCDQCSFMKKGTICRRARGDDLDDYCNGRSAGCPRNPFHA.

The 73-residue stretch at 1-73 (EAGKDCDCGS…AGCPRNPFHA (73 aa)) folds into the Disintegrin domain. Intrachain disulfides connect Cys-6–Cys-21, Cys-8–Cys-16, Cys-15–Cys-38, Cys-29–Cys-35, Cys-34–Cys-59, and Cys-47–Cys-66. Positions 51 to 53 (RGD) match the Cell attachment site motif.

It belongs to the venom metalloproteinase (M12B) family. P-II subfamily. P-IIa sub-subfamily. Monomer (disintegrin). As to expression, expressed by the venom gland.

It is found in the secreted. Inhibits fibrinogen interaction with platelets. Acts by binding to the alpha-IIb/beta-3 receptor (ITGA2B/ITGB3) on the platelet surface and inhibits aggregation induced by ADP, thrombin, platelet-activating factor and collagen. The protein is Disintegrin trigramin-beta-2 of Craspedocephalus gramineus (Bamboo pit viper).